Reading from the N-terminus, the 348-residue chain is F(420)H(2) dehydrogenase subunit H (348 aa).

Helical transmembrane passes span 20 to 40 (GVVGLVLVGAIFLGAMGAVWL), 93 to 113 (IFMMSSVFLMLVAIPVGAVFI), 127 to 147 (ISVLYIEAMSAITIFGIFMIA), 172 to 192 (PLGITVVSVAIMTGSLNIVEI), 198 to 218 (LLWNIFLQPIGFIVFFIALMA), 259 to 279 (ILGSFLVALLFLGGWNVPAFV), 286 to 306 (GLIAPTGFFLLKTVLVLMTII), and 328 to 348 (LLPLSLLNLVWAVGLGLYLGA).

It belongs to the complex I subunit 1 family. As to quaternary structure, the FPO complex is composed of at least 13 different subunits. FpoA, FpoH, FpoJ, FpoK, FpoL, FpoM and FpoN proteins constitute the membrane sector of the complex.

It localises to the cell membrane. The catalysed reaction is methanophenazine + reduced coenzyme F420-(gamma-L-Glu)(n) = dihydromethanophenazine + oxidized coenzyme F420-(gamma-L-Glu)(n) + H(+). Component of the F(420)H(2) dehydrogenase (FPO complex) which is part of the energy-conserving F(420)H(2):heterodisulfide oxidoreductase system. The membrane-bound electron transfer system of the complex plays an important role in the metabolism of methylotrophic methanogens when the organisms grow on methanol or methylamines. Catalyzes the oxidation of methanophenazine to dihydromethanophenazine. It shuttles electrons from F(420)H(2), via FAD and iron-sulfur (Fe-S) centers, to methanophenazine (an electron carrier in the membrane). It couples the redox reaction to proton translocation (for every two electrons transferred, two hydrogen ions are translocated across the cytoplasmic membrane), and thus conserves the redox energy in a proton gradient. This Methanosarcina acetivorans (strain ATCC 35395 / DSM 2834 / JCM 12185 / C2A) protein is F(420)H(2) dehydrogenase subunit H.